The primary structure comprises 68 residues: Small integral membrane protein 10-like protein 1 (68 aa).

The tract at residues 1–21 (MAPAAAPSSLAVRASSPAATP) is disordered.

This Homo sapiens (Human) protein is Small integral membrane protein 10-like protein 1.